The following is a 155-amino-acid chain: Ribosome maturation factor RimP (155 aa).

The protein belongs to the RimP family.

It is found in the cytoplasm. Functionally, required for maturation of 30S ribosomal subunits. The chain is Ribosome maturation factor RimP from Synechococcus sp. (strain RCC307).